The primary structure comprises 88 residues: Small ribosomal subunit protein uS15 (88 aa).

Over residues 1 to 12 (MITQEEQQKIID) the composition is skewed to basic and acidic residues. The tract at residues 1–24 (MITQEEQQKIIDRFGNGPNDTGTP) is disordered.

This sequence belongs to the universal ribosomal protein uS15 family. Part of the 30S ribosomal subunit. Forms a bridge to the 50S subunit in the 70S ribosome, contacting the 23S rRNA.

Functionally, one of the primary rRNA binding proteins, it binds directly to 16S rRNA where it helps nucleate assembly of the platform of the 30S subunit by binding and bridging several RNA helices of the 16S rRNA. Its function is as follows. Forms an intersubunit bridge (bridge B4) with the 23S rRNA of the 50S subunit in the ribosome. The chain is Small ribosomal subunit protein uS15 from Salinibacter ruber (strain DSM 13855 / M31).